The sequence spans 122 residues: UPF0102 protein CE1920 (122 aa).

The protein belongs to the UPF0102 family.

The polypeptide is UPF0102 protein CE1920 (Corynebacterium efficiens (strain DSM 44549 / YS-314 / AJ 12310 / JCM 11189 / NBRC 100395)).